Here is a 161-residue protein sequence, read N- to C-terminus: Ribosome maturation factor RimP (161 aa).

The protein belongs to the RimP family.

The protein resides in the cytoplasm. Its function is as follows. Required for maturation of 30S ribosomal subunits. This is Ribosome maturation factor RimP from Rickettsia rickettsii (strain Iowa).